Consider the following 599-residue polypeptide: Endo-1,4-beta-xylanase B (599 aa).

A signal peptide spans Met-1 to Ala-37. Positions Ala-38–Ala-136 constitute a CBM2 domain. Cys-39 and Cys-133 form a disulfide bridge. The region spanning Leu-163 to Val-289 is the CBM6 domain. One can recognise a GH10 domain in the interval Ser-315 to Asn-595. The active-site Proton donor is Glu-431. The Nucleophile role is filled by Glu-530.

The protein belongs to the glycosyl hydrolase 10 (cellulase F) family.

The catalysed reaction is Endohydrolysis of (1-&gt;4)-beta-D-xylosidic linkages in xylans.. It participates in glycan metabolism; hemicellulose degradation. Functionally, xylanase B contributes to hydrolyze hemicellulose, the major component of plant cell-walls. This chain is Endo-1,4-beta-xylanase B (xynB), found in Cellvibrio japonicus (strain Ueda107) (Pseudomonas fluorescens subsp. cellulosa).